A 175-amino-acid chain; its full sequence is B9 domain-containing protein 2 (175 aa).

One can recognise a C2 B9-type domain in the interval 2–118 (AEVHVIGQII…DCPTWRPLGS (117 aa)).

The protein belongs to the B9D family. Part of the tectonic-like complex (also named B9 complex). Interacts with TUBG1.

Its subcellular location is the cytoplasm. The protein localises to the cytoskeleton. It is found in the cilium basal body. The protein resides in the cilium axoneme. It localises to the nucleus. Functionally, component of the tectonic-like complex, a complex localized at the transition zone of primary cilia and acting as a barrier that prevents diffusion of transmembrane proteins between the cilia and plasma membranes. The chain is B9 domain-containing protein 2 (B9d2) from Rattus norvegicus (Rat).